The sequence spans 311 residues: tRNA dimethylallyltransferase (311 aa).

Position 13–20 (13–20 (GPTASGKT)) interacts with ATP. Residue 15–20 (TASGKT) participates in substrate binding. Interaction with substrate tRNA stretches follow at residues 38–41 (DSMQ) and 166–170 (QRGLR).

It belongs to the IPP transferase family. Monomer. Mg(2+) serves as cofactor.

The enzyme catalyses adenosine(37) in tRNA + dimethylallyl diphosphate = N(6)-dimethylallyladenosine(37) in tRNA + diphosphate. In terms of biological role, catalyzes the transfer of a dimethylallyl group onto the adenine at position 37 in tRNAs that read codons beginning with uridine, leading to the formation of N6-(dimethylallyl)adenosine (i(6)A). This is tRNA dimethylallyltransferase from Staphylococcus aureus (strain MSSA476).